The sequence spans 696 residues: Polyphosphate kinase (696 aa).

N45 serves as a coordination point for ATP. Mg(2+) contacts are provided by R373 and R403. The PLD phosphodiesterase domain maps to 428 to 462 (PGLKIHSKLLMISRREGDDIIRYAHIGTGNFHEKT). H433 (phosphohistidine intermediate) is an active-site residue. 3 residues coordinate ATP: Y466, R562, and H590.

The protein belongs to the polyphosphate kinase 1 (PPK1) family. Mg(2+) is required as a cofactor. An intermediate of this reaction is the autophosphorylated ppk in which a phosphate is covalently linked to a histidine residue through a N-P bond.

It catalyses the reaction [phosphate](n) + ATP = [phosphate](n+1) + ADP. Catalyzes the reversible transfer of the terminal phosphate of ATP to form a long-chain polyphosphate (polyP). This Vibrio parahaemolyticus serotype O3:K6 (strain RIMD 2210633) protein is Polyphosphate kinase.